The following is a 66-amino-acid chain: Large ribosomal subunit protein uL29 (66 aa).

The protein belongs to the universal ribosomal protein uL29 family.

This chain is Large ribosomal subunit protein uL29, found in Borreliella afzelii (strain PKo) (Borrelia afzelii).